Consider the following 289-residue polypeptide: Acetyl-coenzyme A carboxylase carboxyl transferase subunit beta (289 aa).

The CoA carboxyltransferase N-terminal domain occupies 27–289 (LWSKCPSCES…SFMRVPAGAA (263 aa)). Zn(2+) is bound by residues cysteine 31, cysteine 34, cysteine 50, and cysteine 53. Residues 31–53 (CPSCESVLYRTDLESNSEVCPKC) form a C4-type zinc finger.

This sequence belongs to the AccD/PCCB family. Acetyl-CoA carboxylase is a heterohexamer composed of biotin carboxyl carrier protein (AccB), biotin carboxylase (AccC) and two subunits each of ACCase subunit alpha (AccA) and ACCase subunit beta (AccD). Zn(2+) serves as cofactor.

It is found in the cytoplasm. It catalyses the reaction N(6)-carboxybiotinyl-L-lysyl-[protein] + acetyl-CoA = N(6)-biotinyl-L-lysyl-[protein] + malonyl-CoA. It participates in lipid metabolism; malonyl-CoA biosynthesis; malonyl-CoA from acetyl-CoA: step 1/1. Functionally, component of the acetyl coenzyme A carboxylase (ACC) complex. Biotin carboxylase (BC) catalyzes the carboxylation of biotin on its carrier protein (BCCP) and then the CO(2) group is transferred by the transcarboxylase to acetyl-CoA to form malonyl-CoA. This Methylobacillus flagellatus (strain ATCC 51484 / DSM 6875 / VKM B-1610 / KT) protein is Acetyl-coenzyme A carboxylase carboxyl transferase subunit beta.